We begin with the raw amino-acid sequence, 303 residues long: Acetylglutamate kinase (303 aa).

Substrate contacts are provided by residues 69–70 (GG), arginine 91, and asparagine 201.

It belongs to the acetylglutamate kinase family. ArgB subfamily.

The protein resides in the cytoplasm. The catalysed reaction is N-acetyl-L-glutamate + ATP = N-acetyl-L-glutamyl 5-phosphate + ADP. The protein operates within amino-acid biosynthesis; L-arginine biosynthesis; N(2)-acetyl-L-ornithine from L-glutamate: step 2/4. Its function is as follows. Catalyzes the ATP-dependent phosphorylation of N-acetyl-L-glutamate. This chain is Acetylglutamate kinase, found in Novosphingobium aromaticivorans (strain ATCC 700278 / DSM 12444 / CCUG 56034 / CIP 105152 / NBRC 16084 / F199).